A 148-amino-acid polypeptide reads, in one-letter code: Receptor activity-modifying protein 1 (148 aa).

The first 26 residues, 1 to 26 (MAPGLRGLPRRGLWLLLAHHLFMVTA), serve as a signal peptide directing secretion. 3 cysteine pairs are disulfide-bonded: C27–C82, C40–C72, and C57–C104. Residues 27 to 118 (CRDPDYGTLI…RALRDPPNSI (92 aa)) lie on the Extracellular side of the membrane. The helical transmembrane segment at 119-140 (LCPFIVLPITVTLLMTALVVWR) threads the bilayer. Residues 141-148 (SKRTEGIV) are Cytoplasmic-facing.

It belongs to the RAMP family. In terms of assembly, heterodimer of CALCRL and RAMP1; the interaction induces allosteric modulation of CALCRL function and CGRP1/CALCA and CGRP2/CALCB ligand specificity. Heterodimer of CALCR and RAMP1; interaction forms the AMYR1 receptor complex for amylin/IAPP and CGRP1/CALCA ligands.

The protein resides in the cell membrane. Functionally, accessory protein that interacts with and modulates the function of G-protein coupled receptors including calcitonin gene-related peptide type 1 receptor (CALCRL) and calcitonin receptor (CALCR). Required for the transport of CALCRL to the plasma membrane. Together with CALCRL, form the receptor complex for the calcitonin gene-related peptides CGRP1/CALCA and CGRP2/CALCB. Together with CALCR, form the AMYR1 receptor complex for amylin/IAPP and CGRP1/CALCA. The polypeptide is Receptor activity-modifying protein 1 (Rattus norvegicus (Rat)).